The sequence spans 1604 residues: Ubiquitin carboxyl-terminal hydrolase 32 (1604 aa).

EF-hand domains are found at residues 91 to 126, 228 to 263, and 264 to 299; these read KDEE…VDGK, IRPS…CCRG, and PLAE…LLEV. Residues Asp-241, Asn-243, Asp-245, His-247, Glu-252, Asp-277, Asp-279, Asp-281, and Glu-288 each coordinate Ca(2+). Residues 369 to 585 form the DUSP domain; sequence ATPEEEGQII…SNLALPRPVI (217 aa). Residues 734–1567 enclose the USP domain; it reads TGLSNLGNTC…SAYILFYEQQ (834 aa). The active-site Nucleophile is the Cys-743. A Phosphotyrosine modification is found at Tyr-1173. Phosphoserine is present on Ser-1350. The interval 1353–1432 is disordered; it reads EEDVLLSKSP…SKENLDTSKE (80 aa). Residues 1360–1370 are compositionally biased toward polar residues; the sequence is KSPSSLSANVT. The span at 1371–1399 shows a compositional bias: low complexity; it reads SSPKGSPSSSRKSGASCPSSKNSSPNSSP. Residues Ser-1372 and Ser-1376 each carry the phosphoserine modification. A compositionally biased stretch (polar residues) spans 1415–1424; sequence GSKNKLSNSK. Ser-1454 is subject to Phosphoserine. A disordered region spans residues 1484–1504; sequence SNGQLGNHSEEDSTDDQREET. A compositionally biased stretch (basic and acidic residues) spans 1491 to 1504; the sequence is HSEEDSTDDQREET. The active-site Proton acceptor is His-1526. Position 1588 is a phosphoserine (Ser-1588). Position 1601 is a cysteine methyl ester (Cys-1601). Cys-1601 carries the S-farnesyl cysteine lipid modification. A propeptide spans 1602–1604 (removed in mature form); the sequence is VLQ.

Belongs to the peptidase C19 family.

Its subcellular location is the golgi apparatus membrane. The catalysed reaction is Thiol-dependent hydrolysis of ester, thioester, amide, peptide and isopeptide bonds formed by the C-terminal Gly of ubiquitin (a 76-residue protein attached to proteins as an intracellular targeting signal).. Deubiquitinase that can remove conjugated ubiquitin from target proteins, such as RAB7A and LAMTOR1. Acts as a positive regulator of the mTORC1 signaling by mediating deubiquitination of LAMTOR1, thereby promoting the association between LAMTOR1 and the lysosomal V-ATPase complex and subsequent activation of the mTORC1 complex. This chain is Ubiquitin carboxyl-terminal hydrolase 32, found in Mus musculus (Mouse).